Here is a 250-residue protein sequence, read N- to C-terminus: MTIKNVICDIDGVLMHDNVAVPGAAEFLHGIMDKGLPLVLLTNYPSQTGQDLANRFATAGVDVPDSVFYTSAMATADFLRRQEGKKAYVVGEGALIHELYKAGFTITDVNPDFVIVGETRSYNWDMMHKAAYFVANGARFIATNPDTHGRGFYPACGALCAGIEKISGRKPFYVGKPSPWIIRAALNKMQAHSEETVIVGDNLRTDILAGFQAGLETILVLSGVSSLDDIDSMPFRPSWIYPSVAEIDVI.

Mg(2+)-binding residues include Asp9 and Asp11. Residue Asp11 is part of the active site. Residues Asp11, Thr42–Asn43, and Lys176 contribute to the substrate site. Residue Asp201 participates in Mg(2+) binding. Asn202–Thr205 contacts substrate.

Belongs to the HAD-like hydrolase superfamily. NagD family. In terms of assembly, monomer. The cofactor is Mg(2+). Mn(2+) is required as a cofactor. Co(2+) serves as cofactor. Requires Zn(2+) as cofactor.

The enzyme catalyses a ribonucleoside 5'-phosphate + H2O = a ribonucleoside + phosphate. Functionally, catalyzes the dephosphorylation of an unusually broad range of substrate including deoxyribo- and ribonucleoside tri-, di-, and monophosphates, as well as polyphosphate and glucose-1-P (Glu1P). The polypeptide is Ribonucleotide monophosphatase NagD (nagD) (Escherichia coli O157:H7).